The sequence spans 184 residues: ATP synthase subunit delta (184 aa).

This sequence belongs to the ATPase delta chain family. As to quaternary structure, F-type ATPases have 2 components, F(1) - the catalytic core - and F(0) - the membrane proton channel. F(1) has five subunits: alpha(3), beta(3), gamma(1), delta(1), epsilon(1). F(0) has three main subunits: a(1), b(2) and c(10-14). The alpha and beta chains form an alternating ring which encloses part of the gamma chain. F(1) is attached to F(0) by a central stalk formed by the gamma and epsilon chains, while a peripheral stalk is formed by the delta and b chains.

The protein resides in the cell inner membrane. Functionally, f(1)F(0) ATP synthase produces ATP from ADP in the presence of a proton or sodium gradient. F-type ATPases consist of two structural domains, F(1) containing the extramembraneous catalytic core and F(0) containing the membrane proton channel, linked together by a central stalk and a peripheral stalk. During catalysis, ATP synthesis in the catalytic domain of F(1) is coupled via a rotary mechanism of the central stalk subunits to proton translocation. In terms of biological role, this protein is part of the stalk that links CF(0) to CF(1). It either transmits conformational changes from CF(0) to CF(1) or is implicated in proton conduction. This chain is ATP synthase subunit delta, found in Rickettsia conorii (strain ATCC VR-613 / Malish 7).